Here is a 439-residue protein sequence, read N- to C-terminus: uncharacterized protein (439 aa).

A YcaO domain is found at 116–439; sequence GKAASYRAAQ…PMRTPLQEAE (324 aa).

This is an uncharacterized protein from Mycobacterium tuberculosis (strain CDC 1551 / Oshkosh).